We begin with the raw amino-acid sequence, 163 residues long: EF-hand calcium-binding domain-containing protein 11 (163 aa).

EF-hand domains are found at residues 18 to 53 (SEHR…LFGY), 91 to 126 (RYRN…VAPK), and 127 to 162 (LPER…GQKE). Residues Asp-140, Asp-142, Asp-144, His-146, and Asp-151 each coordinate Ca(2+).

The sequence is that of EF-hand calcium-binding domain-containing protein 11 (EFCAB11) from Homo sapiens (Human).